The sequence spans 328 residues: MKAPVRVAVTGAAGQIGYALLFRIASGEMLGKDQPVILQLLELSNEKAQAALKGVMMELEDCAFPLLAGMVGTDDAEVAFKDIDVALLVGARPRGPGMERKDLLLENAKIFTAQGAALNKVAKRDVKVLVVGNPANTNAYIAMKSAPDLNPNNFTAMLRLDHNRALSQLALKLGKPVGGIEKLVVWGNHSPTMYPDYRFATSDGASIGDAINDQEWNASTFIPTVGKRGAAIIEARGLSSAASAANAAIDHVRDWVLGSNGKWVTMGVPSDGSYGISEGVIFGFPVTTENGQYSLVKDLPIDDFSQKYIDKTLAELEEERSGVSHLLG.

Residue 11–17 participates in NAD(+) binding; the sequence is GAAGQIG. Substrate-binding residues include arginine 94 and arginine 100. Residues asparagine 107, glutamine 114, and 131–133 each bind NAD(+); that span reads VGN. Substrate contacts are provided by asparagine 133 and arginine 164. Residue histidine 189 is the Proton acceptor of the active site.

Belongs to the LDH/MDH superfamily. MDH type 2 family.

It carries out the reaction (S)-malate + NAD(+) = oxaloacetate + NADH + H(+). Its function is as follows. Catalyzes the reversible oxidation of malate to oxaloacetate. The protein is Malate dehydrogenase of Xanthomonas oryzae pv. oryzae (strain PXO99A).